Here is a 972-residue protein sequence, read N- to C-terminus: Leucine--tRNA ligase (972 aa).

Residues 78-89 (PYPSGDGLHVGH) carry the 'HIGH' region motif. The 'KMSKS' region signature appears at 741-745 (KIGKS). Lys744 lines the ATP pocket.

This sequence belongs to the class-I aminoacyl-tRNA synthetase family.

The protein resides in the cytoplasm. It catalyses the reaction tRNA(Leu) + L-leucine + ATP = L-leucyl-tRNA(Leu) + AMP + diphosphate. This is Leucine--tRNA ligase from Mycobacterium leprae (strain Br4923).